Consider the following 115-residue polypeptide: NADH-ubiquinone oxidoreductase chain 3 (115 aa).

Helical transmembrane passes span 3-23, 55-75, and 87-107; these read LMLVLLINTTISLVLVTIAFW, FFLVAITFLLFDLEIALLLPL, and VLIMALMLISILALGLAYEWI.

Belongs to the complex I subunit 3 family. As to quaternary structure, core subunit of respiratory chain NADH dehydrogenase (Complex I) which is composed of 45 different subunits. Interacts with TMEM186. Interacts with TMEM242.

The protein resides in the mitochondrion inner membrane. The enzyme catalyses a ubiquinone + NADH + 5 H(+)(in) = a ubiquinol + NAD(+) + 4 H(+)(out). Functionally, core subunit of the mitochondrial membrane respiratory chain NADH dehydrogenase (Complex I) which catalyzes electron transfer from NADH through the respiratory chain, using ubiquinone as an electron acceptor. Essential for the catalytic activity of complex I. This chain is NADH-ubiquinone oxidoreductase chain 3, found in Oryctolagus cuniculus (Rabbit).